The chain runs to 214 residues: tRNA (guanine-N(7)-)-methyltransferase (214 aa).

Residues E45, D70, N97, and N119 each contribute to the S-adenosyl-L-methionine site. Residue K123 participates in substrate binding. Residues 125–130 are interaction with RNA; it reads RHNKRR. Residues D155 and 193–196 each bind substrate; that span reads TEYE.

It belongs to the class I-like SAM-binding methyltransferase superfamily. TrmB family.

It catalyses the reaction guanosine(46) in tRNA + S-adenosyl-L-methionine = N(7)-methylguanosine(46) in tRNA + S-adenosyl-L-homocysteine. It functions in the pathway tRNA modification; N(7)-methylguanine-tRNA biosynthesis. Its function is as follows. Catalyzes the formation of N(7)-methylguanine at position 46 (m7G46) in tRNA. This chain is tRNA (guanine-N(7)-)-methyltransferase, found in Clostridium novyi (strain NT).